Here is a 299-residue protein sequence, read N- to C-terminus: Very long chain fatty acid elongase 5 (299 aa).

M1 is modified (N-acetylmethionine). The next 7 helical transmembrane spans lie at 26 to 46 (WFLL…LLIV), 64 to 84 (ILQL…YELV), 112 to 132 (VLWW…FFIL), 139 to 158 (ITVL…WFVM), 168 to 187 (FGAT…YGLS), 205 to 225 (GQLV…FWPC), and 227 to 247 (FPLG…ALFT). The tract at residues 274-299 (VAAVNGHTNSFPSLENSVKPRKQRKD) is disordered. Residues 279–289 (GHTNSFPSLEN) show a composition bias toward polar residues.

The protein belongs to the ELO family. ELOVL5 subfamily. Interacts with TECR.

The protein localises to the endoplasmic reticulum membrane. The protein resides in the cell projection. It is found in the dendrite. It catalyses the reaction a very-long-chain acyl-CoA + malonyl-CoA + H(+) = a very-long-chain 3-oxoacyl-CoA + CO2 + CoA. It carries out the reaction (6Z,9Z,12Z)-octadecatrienoyl-CoA + malonyl-CoA + H(+) = (8Z,11Z,14Z)-3-oxoeicosatrienoyl-CoA + CO2 + CoA. The catalysed reaction is (9Z,12Z,15Z)-octadecatrienoyl-CoA + malonyl-CoA + H(+) = (11Z,14Z,17Z)-3-oxoeicosatrienoyl-CoA + CO2 + CoA. The enzyme catalyses (9Z)-hexadecenoyl-CoA + malonyl-CoA + H(+) = 3-oxo-(11Z)-octadecenoyl-CoA + CO2 + CoA. It catalyses the reaction (9Z)-octadecenoyl-CoA + malonyl-CoA + H(+) = 3-oxo-(11Z)-eicosenoyl-CoA + CO2 + CoA. It carries out the reaction (11Z)-octadecenoyl-CoA + malonyl-CoA + H(+) = 3-oxo-(13Z)-eicosenoyl-CoA + CO2 + CoA. The catalysed reaction is (9Z,12Z)-octadecadienoyl-CoA + malonyl-CoA + H(+) = (11Z,14Z)-3-oxoicosa-11,14-dienoyl-CoA + CO2 + CoA. The enzyme catalyses (6Z,9Z,12Z,15Z)-octadecatetraenoyl-CoA + malonyl-CoA + H(+) = (8Z,11Z,14Z,17Z)-3-oxoicosatetraenoyl-CoA + CO2 + CoA. It catalyses the reaction (5Z,8Z,11Z,14Z)-eicosatetraenoyl-CoA + malonyl-CoA + H(+) = (7Z,10Z,13Z,16Z)-3-oxodocosatetraenoyl-CoA + CO2 + CoA. It carries out the reaction (5Z,8Z,11Z,14Z,17Z)-eicosapentaenoyl-CoA + malonyl-CoA + H(+) = 3-oxo-(7Z,10Z,13Z,16Z,19Z)-docosapentaenoyl-CoA + CO2 + CoA. It functions in the pathway lipid metabolism; polyunsaturated fatty acid biosynthesis. In terms of biological role, catalyzes the first and rate-limiting reaction of the four reactions that constitute the long-chain fatty acids elongation cycle. This endoplasmic reticulum-bound enzymatic process allows the addition of 2 carbons to the chain of long- and very long-chain fatty acids (VLCFAs) per cycle. Condensing enzyme that acts specifically toward polyunsaturated acyl-CoA with the higher activity toward C18:3(n-6) acyl-CoA. May participate in the production of monounsaturated and of polyunsaturated VLCFAs of different chain lengths that are involved in multiple biological processes as precursors of membrane lipids and lipid mediators. In conditions where the essential linoleic and alpha linoleic fatty acids are lacking it is also involved in the synthesis of Mead acid from oleic acid. The chain is Very long chain fatty acid elongase 5 from Mus musculus (Mouse).